A 686-amino-acid chain; its full sequence is DNA ligase (686 aa).

NAD(+) is bound by residues 31–35, 80–81, and E109; these read DSEYD and SL. K111 acts as the N6-AMP-lysine intermediate in catalysis. R132, E166, K280, and K304 together coordinate NAD(+). 4 residues coordinate Zn(2+): C430, C433, C448, and C453. A BRCT domain is found at 611 to 686; the sequence is NVEGILSGKT…IWSEQDLLDL (76 aa).

Belongs to the NAD-dependent DNA ligase family. LigA subfamily. Mg(2+) is required as a cofactor. Requires Mn(2+) as cofactor.

It carries out the reaction NAD(+) + (deoxyribonucleotide)n-3'-hydroxyl + 5'-phospho-(deoxyribonucleotide)m = (deoxyribonucleotide)n+m + AMP + beta-nicotinamide D-nucleotide.. Functionally, DNA ligase that catalyzes the formation of phosphodiester linkages between 5'-phosphoryl and 3'-hydroxyl groups in double-stranded DNA using NAD as a coenzyme and as the energy source for the reaction. It is essential for DNA replication and repair of damaged DNA. The sequence is that of DNA ligase from Lactococcus lactis subsp. cremoris (strain SK11).